The sequence spans 169 residues: Putative phosphoesterase SH1944 (169 aa).

His34 (proton donor) is an active-site residue. Short sequence motifs (HXTX) lie at residues 34 to 37 (HITI) and 115 to 118 (HFTI). The Proton acceptor role is filled by His115.

The protein belongs to the 2H phosphoesterase superfamily. YjcG family.

This is Putative phosphoesterase SH1944 from Staphylococcus haemolyticus (strain JCSC1435).